Here is a 220-residue protein sequence, read N- to C-terminus: GTP cyclohydrolase 1 (220 aa).

Residues Cys-113, His-116, and Cys-184 each coordinate Zn(2+).

This sequence belongs to the GTP cyclohydrolase I family. As to quaternary structure, homomer.

It catalyses the reaction GTP + H2O = 7,8-dihydroneopterin 3'-triphosphate + formate + H(+). The protein operates within cofactor biosynthesis; 7,8-dihydroneopterin triphosphate biosynthesis; 7,8-dihydroneopterin triphosphate from GTP: step 1/1. This chain is GTP cyclohydrolase 1, found in Hamiltonella defensa subsp. Acyrthosiphon pisum (strain 5AT).